Here is a 357-residue protein sequence, read N- to C-terminus: tRNA N6-adenosine threonylcarbamoyltransferase (357 aa).

Fe cation-binding residues include H119 and H123. Substrate-binding positions include L141–G145, D174, G187, and N284. D312 serves as a coordination point for Fe cation.

It belongs to the KAE1 / TsaD family. It depends on Fe(2+) as a cofactor.

The protein resides in the cytoplasm. It carries out the reaction L-threonylcarbamoyladenylate + adenosine(37) in tRNA = N(6)-L-threonylcarbamoyladenosine(37) in tRNA + AMP + H(+). Functionally, required for the formation of a threonylcarbamoyl group on adenosine at position 37 (t(6)A37) in tRNAs that read codons beginning with adenine. Is involved in the transfer of the threonylcarbamoyl moiety of threonylcarbamoyl-AMP (TC-AMP) to the N6 group of A37, together with TsaE and TsaB. TsaD likely plays a direct catalytic role in this reaction. The polypeptide is tRNA N6-adenosine threonylcarbamoyltransferase (Pelagibacter ubique (strain HTCC1062)).